The sequence spans 413 residues: MAMNFVTFNQDYSYLAVATAKGFRIFTTDPFAKSYETKEGNIAIIEMLFSTSLVALILSPRRLQITNTKRQSTICELTFPTTVLAVKLNRKRLVIVLEDQIYLYDIQTMKLLYTIETSPNPSAICALSPSSDNCYLAYPLPHKAPPTSFTPPSHAPPGNTHISPTSGEVLIFDTLKLEAINVIEAHRSPLACITLNSDGTLIATASDKGTIIRVFSVPDGHKLYQFRRGSIPSRIYSMSFNTTSTLLCVSSSTETIHLFKLSQGQSSESSLPSPSAPQRSMSQSSLSNSPDEDETSGDKDSSEFHSRKHNGTLMGMLRRTSQTVGSSFAAKVGGYLPKGVSEMWEPARDFAWIKLPKSNPGPGGNGNTGPLRSVVAMSNNTPQVMVVTSDGNFYVFSIDLSKGGEGTLTKQYS.

5 WD repeats span residues 1-36 (MAMN…KSYE), 69-114 (KRQS…LLYT), 141-182 (PHKA…AINV), 185-225 (AHRS…KLYQ), and 230-269 (SIPS…SSES). Positions 226–230 (FRRGS) match the L/FRRG motif motif. Residues 263 to 289 (QGQSSESSLPSPSAPQRSMSQSSLSNS) are compositionally biased toward low complexity. Residues 263 to 315 (QGQSSESSLPSPSAPQRSMSQSSLSNSPDEDETSGDKDSSEFHSRKHNGTLMG) are disordered. A compositionally biased stretch (basic and acidic residues) spans 296-305 (SGDKDSSEFH). WD repeat units follow at residues 308–354 (KHNG…AWIK) and 366–406 (GNTG…GGEG).

It belongs to the WD repeat PROPPIN family. Component of the PI(3,5)P2 regulatory complex.

The protein resides in the preautophagosomal structure membrane. Its subcellular location is the vacuole membrane. It is found in the endosome membrane. The PI(3,5)P2 regulatory complex regulates both the synthesis and turnover of phosphatidylinositol 3,5-bisphosphate (PtdIns(3,5)P2). Necessary for proper vacuole morphology. Plays an important role in osmotically-induced vacuole fragmentation. Required for cytoplasm to vacuole transport (Cvt) vesicle formation, pexophagy and starvation-induced autophagy. Involved in correct atg9 trafficking to the pre-autophagosomal structure. Might also be involved in premeiotic DNA replication. This chain is Autophagy-related protein 18 (atg18), found in Aspergillus oryzae (strain ATCC 42149 / RIB 40) (Yellow koji mold).